The chain runs to 470 residues: MNPNQKIITIGSASLGILILNVILHVVSIIVTVLVLNNNGTGLNCNGTIIREYNETVRVERVIQWYNTNTIEYIERPSNEYYMNNTEPLCEAQGFAPFSKDNGIRIGSRGHVFVIREPFVSCSPSECRTFFLTQGSLLNDKHSNGTVKDRSPYRTLMSVKIGQSPNVYQARFESVAWSATACHDGKKWMTVGVTGPDNQAVAVVNYGGVPVDIINSWAGDILRTQESSCTCIKGDCYWVMTDGPANRQAKYRIFKAKDGRIIGQTDISFNGGHIEECSCYPNEGKVECVCRDNWTGTNRPILVISPDLSYTVGYLCAGIPTDTPRGEDSQFTGSCTSPLGNKGYGVKGFGFRQGTDVWAGRTISRTSRSGFEIIKIRNGWTQNSKDQIRRQVIIDNPNWSGYSGSFTLPVELTKKGCLVPCFWVEMIRGKPEETTIWTSSSSIVMCGVDHKIASWSWHDGAILPFDIDKM.

Topologically, residues 1-14 are intravirion; sequence MNPNQKIITIGSAS. The segment at 11 to 32 is involved in apical transport and lipid raft association; it reads GSASLGILILNVILHVVSIIVT. The helical transmembrane segment at 15 to 35 threads the bilayer; it reads LGILILNVILHVVSIIVTVLV. A hypervariable stalk region region spans residues 32 to 86; the sequence is TVLVLNNNGTGLNCNGTIIREYNETVRVERVIQWYNTNTIEYIERPSNEYYMNNT. At 36–470 the chain is on the virion surface side; the sequence is LNNNGTGLNC…AILPFDIDKM (435 aa). Asn-39, Asn-46, Asn-54, and Asn-84 each carry an N-linked (GlcNAc...) asparagine; by host glycan. Residues 89–470 form a head of neuraminidase region; that stretch reads LCEAQGFAPF…AILPFDIDKM (382 aa). 8 cysteine pairs are disulfide-bonded: Cys-90-Cys-417, Cys-122-Cys-127, Cys-182-Cys-229, Cys-231-Cys-236, Cys-277-Cys-290, Cys-279-Cys-288, Cys-316-Cys-335, and Cys-421-Cys-446. Position 116 (Arg-116) interacts with substrate. An N-linked (GlcNAc...) asparagine; by host glycan is attached at Asn-144. Residue Asp-149 is the Proton donor/acceptor of the active site. Arg-150 provides a ligand contact to substrate. 275–276 contacts substrate; sequence EE. Arg-291 serves as a coordination point for substrate. Residue Asp-292 coordinates Ca(2+). An N-linked (GlcNAc...) asparagine; by host glycan is attached at Asn-293. Ca(2+) is bound by residues Gly-296 and Asp-322. Arg-368 contacts substrate. A glycan (N-linked (GlcNAc...) asparagine; by host) is linked at Asn-398. Tyr-402 serves as the catalytic Nucleophile.

The protein belongs to the glycosyl hydrolase 34 family. In terms of assembly, homotetramer. Ca(2+) is required as a cofactor. In terms of processing, N-glycosylated.

It is found in the virion membrane. The protein resides in the host apical cell membrane. The enzyme catalyses Hydrolysis of alpha-(2-&gt;3)-, alpha-(2-&gt;6)-, alpha-(2-&gt;8)- glycosidic linkages of terminal sialic acid residues in oligosaccharides, glycoproteins, glycolipids, colominic acid and synthetic substrates.. With respect to regulation, inhibited by the neuraminidase inhibitors zanamivir (Relenza) and oseltamivir (Tamiflu). These drugs interfere with the release of progeny virus from infected cells and are effective against all influenza strains. Resistance to neuraminidase inhibitors is quite rare. Catalyzes the removal of terminal sialic acid residues from viral and cellular glycoconjugates. Cleaves off the terminal sialic acids on the glycosylated HA during virus budding to facilitate virus release. Additionally helps virus spread through the circulation by further removing sialic acids from the cell surface. These cleavages prevent self-aggregation and ensure the efficient spread of the progeny virus from cell to cell. Otherwise, infection would be limited to one round of replication. Described as a receptor-destroying enzyme because it cleaves a terminal sialic acid from the cellular receptors. May facilitate viral invasion of the upper airways by cleaving the sialic acid moieties on the mucin of the airway epithelial cells. Likely to plays a role in the budding process through its association with lipid rafts during intracellular transport. May additionally display a raft-association independent effect on budding. Plays a role in the determination of host range restriction on replication and virulence. Sialidase activity in late endosome/lysosome traffic seems to enhance virus replication. The polypeptide is Neuraminidase (Influenza A virus (strain A/Equine/Santiago/1/1985 H3N8)).